The chain runs to 1117 residues: Isoleucine--tRNA ligase (1117 aa).

Residues 64–74 (PFANGLPHYGH) carry the 'HIGH' region motif. The 'KMSKS' region motif lies at 647 to 651 (KLSKR). Lys650 provides a ligand contact to ATP.

The protein belongs to the class-I aminoacyl-tRNA synthetase family. IleS type 2 subfamily. As to quaternary structure, monomer. It depends on Zn(2+) as a cofactor.

The protein resides in the cytoplasm. The enzyme catalyses tRNA(Ile) + L-isoleucine + ATP = L-isoleucyl-tRNA(Ile) + AMP + diphosphate. Catalyzes the attachment of isoleucine to tRNA(Ile). As IleRS can inadvertently accommodate and process structurally similar amino acids such as valine, to avoid such errors it has two additional distinct tRNA(Ile)-dependent editing activities. One activity is designated as 'pretransfer' editing and involves the hydrolysis of activated Val-AMP. The other activity is designated 'posttransfer' editing and involves deacylation of mischarged Val-tRNA(Ile). This Ehrlichia ruminantium (strain Welgevonden) protein is Isoleucine--tRNA ligase.